The primary structure comprises 452 residues: Phosphoglucosamine mutase (452 aa).

Catalysis depends on S104, which acts as the Phosphoserine intermediate. The Mg(2+) site is built by S104, D246, D248, and D250. Residue S104 is modified to Phosphoserine.

Belongs to the phosphohexose mutase family. Mg(2+) serves as cofactor. Post-translationally, activated by phosphorylation.

It carries out the reaction alpha-D-glucosamine 1-phosphate = D-glucosamine 6-phosphate. Catalyzes the conversion of glucosamine-6-phosphate to glucosamine-1-phosphate. The sequence is that of Phosphoglucosamine mutase from Streptomyces griseus subsp. griseus (strain JCM 4626 / CBS 651.72 / NBRC 13350 / KCC S-0626 / ISP 5235).